The chain runs to 1296 residues: MAYDVTGLWLESDLTADEEAFVSFYTSRTGTLTLVPGGTGGYYLLWITFRRPPTSREERERRDVEIQTVLAVLSPLLGYPHVIRRSPPRGSERVVSFGYGPNINHRPTTLSTELGVLLRELGLQEWARVEVGRHLVSKITQTLLEPHPPQFIRAFTQNTDLVPYEGLEVPEGPQPVARPHIEDDVIMQAVMISLGADLLPLAVQASTGDNYNVARYFVIPGRCTMERWPWNCARQAFGIHGAYTHVHSSVQRGIRGLGNLLFHSTLFPGGQTQGALTGLYATEPALGPRAHSRFRRIFAKGVQQAEMLQGAGVPTLGGFLKTVRTIATTPGNALAVCSISTTTSKECISLRRMIPQQTVVCLGRFEPTDGPDTYPNLYRDSSDNAVRILETLKLVQRLAKGPIFSGLNRSHDPAPVVRHLQALAPRTGLELFVSKLPDEVRAHLPADPAAGPDAVEAAVAEHFLNVYCSLVFAVVAESGAVPGDLGETPLEVLQRAARLCACQITVLGRTSEQPGIRIVDDLTGETTRVFSVDQPSSTPPSPWLALSDGVRVSGHPEDVDWGLFATGSTIHQLLRHATVGSKEFFTRHMDRCSNGLIAQQAGVGPLDIPVSDYHLVLHSSMLAERVAPRVPDTVEAITPSMANLLHKDFETWVKALPQELLPVPAWRGQAMAMGEQAYKMATNVSTGATYAITEALTNLMFSPVSKLQDVVLTGAVAWSPEDHQAGLLQECLFACKEFCRELGVALSISSAASSPTLSERHVRITQQQETVEVLPFNSVVFTSWAEVKGSRYRVTPDVKVEGNALVYLAVNQSCLIAGSTFEHNFLASRHPIPPLNPSTVASLFMLVKYLMSKRLIVSGHDIGDGGLLPSAIEMALAGCRGLQLSLPAHPNPLELMVSETPGALVEVPQVHLSEVLRAARDYRCVAHPLGTVGPEGQGNNVTILQNETVVFQETLTSLQVSWTSFSDEMWNLVTPPLHPLEDMHRKDLGRLEHHLGSLRAMCLGSQLRLFSCPTSPRRVAALVLPGSSAPYALMAALQNTGFEVATVTVEELKRGQSLSGFSGLITCLRTGCQASYASARGWVLALCNDPTCASTLTEFLNRPDTFSICCGEVGFQLLVALGVVGRSESSPYTYGPTPPQRWAVNLETNVSKLYDSHWLNIQIPQNTKSVFLRVLRGTVLPSWAQGEYLGVRYEQDALEYILRQRGEITLTYHGNAADETLPARHYPRNPTGNSTVAGLTSSDGRHAALIIDPSLMFHPWQWQHVPPDLTPLSMSPWAMAFQSIYLWSVKKINDHH.

It localises to the virion tegument. This Homo sapiens (Human) protein is Protein ORF75 (ORF75).